Here is a 536-residue protein sequence, read N- to C-terminus: Glucose-6-phosphate isomerase (536 aa).

Catalysis depends on E345, which acts as the Proton donor. Catalysis depends on residues H376 and K505.

This sequence belongs to the GPI family.

It localises to the cytoplasm. The enzyme catalyses alpha-D-glucose 6-phosphate = beta-D-fructose 6-phosphate. The protein operates within carbohydrate biosynthesis; gluconeogenesis. It functions in the pathway carbohydrate degradation; glycolysis; D-glyceraldehyde 3-phosphate and glycerone phosphate from D-glucose: step 2/4. Catalyzes the reversible isomerization of glucose-6-phosphate to fructose-6-phosphate. This is Glucose-6-phosphate isomerase from Ruegeria sp. (strain TM1040) (Silicibacter sp.).